We begin with the raw amino-acid sequence, 301 residues long: NAD kinase (301 aa).

Asp-73 serves as the catalytic Proton acceptor. NAD(+)-binding positions include 73-74 (DG), 151-152 (ND), Arg-179, Asp-181, 192-197 (TAYALS), Ala-216, and Gln-250.

The protein belongs to the NAD kinase family. The cofactor is a divalent metal cation.

The protein localises to the cytoplasm. It carries out the reaction NAD(+) + ATP = ADP + NADP(+) + H(+). In terms of biological role, involved in the regulation of the intracellular balance of NAD and NADP, and is a key enzyme in the biosynthesis of NADP. Catalyzes specifically the phosphorylation on 2'-hydroxyl of the adenosine moiety of NAD to yield NADP. The sequence is that of NAD kinase from Methylibium petroleiphilum (strain ATCC BAA-1232 / LMG 22953 / PM1).